Here is a 132-residue protein sequence, read N- to C-terminus: Fluoride-specific ion channel FluC 2 (132 aa).

The next 4 helical transmembrane spans lie at 5–25 (VAVF…NLLG), 34–54 (TFIE…FFAA), 59–79 (PLVQ…MSAF), and 95–115 (VLYL…GIVI). Na(+)-binding residues include glycine 71 and threonine 74.

It belongs to the fluoride channel Fluc/FEX (TC 1.A.43) family.

It localises to the cell membrane. The catalysed reaction is fluoride(in) = fluoride(out). Na(+) is not transported, but it plays an essential structural role and its presence is essential for fluoride channel function. In terms of biological role, fluoride-specific ion channel. Important for reducing fluoride concentration in the cell, thus reducing its toxicity. The chain is Fluoride-specific ion channel FluC 2 from Bacillus licheniformis (strain ATCC 14580 / DSM 13 / JCM 2505 / CCUG 7422 / NBRC 12200 / NCIMB 9375 / NCTC 10341 / NRRL NRS-1264 / Gibson 46).